Reading from the N-terminus, the 474-residue chain is Pyruvate kinase (474 aa).

Position 32 (R32) interacts with substrate. K(+) is bound by residues N34, S36, and D66. 34 to 37 (NFSH) lines the ATP pocket. The ATP site is built by R73 and K155. E221 contributes to the Mg(2+) binding site. Positions 244, 245, and 277 each coordinate substrate. A Mg(2+)-binding site is contributed by D245.

It belongs to the pyruvate kinase family. In terms of assembly, homotetramer. Requires Mg(2+) as cofactor. K(+) serves as cofactor.

The catalysed reaction is pyruvate + ATP = phosphoenolpyruvate + ADP + H(+). It participates in carbohydrate degradation; glycolysis; pyruvate from D-glyceraldehyde 3-phosphate: step 5/5. The protein is Pyruvate kinase (pykF) of Clostridium perfringens (strain 13 / Type A).